The sequence spans 532 residues: E3 ubiquitin-protein ligase MGRN1 (532 aa).

Gly2 carries the N-myristoyl glycine lipid modification. An RING-type zinc finger spans residues 277-316; that stretch reads ECVVCLSDLRDTLILPCRHLCLCTSCADTLRYQANNCPIC. The Required for TSG101-binding motif lies at 384–387; sequence PSAP. Position 389 is a phosphotyrosine (Tyr389). The interval 419-518 is disordered; sequence LQKGKTQSKS…QPVPPADIYL (100 aa). Positions 422–435 are enriched in polar residues; that stretch reads GKTQSKSPDSTLRS. A phosphoserine mark is found at Ser428, Ser449, Ser452, and Ser501. A compositionally biased stretch (acidic residues) spans 442–453; sequence EEDEEKLSEDSD.

Interacts with MC1R and MC4R. Interacts with TSG101. Interacts with mislocalized cytosolically exposed PRNP; this interaction alters MGRN1 subcellular location and causes lysosomal enlargement. Autoubiquitinated in vitro. Widely expressed, with highest levels in brain, heart, kidney and liver. In the CNS, especially prominent in the Purkinje cells of the cerebellum. In the skin, expressed in the basal layer of the epidermis and hair follicles, primarily in the outer root sheath. Isoforms 1, 3, 4 and 5 are equally expressed in the liver. Isoforms 1, 3 and 4 are most abundant in brain, kidney and heart, respectively.

It is found in the early endosome. The protein localises to the cytoplasm. Its subcellular location is the cell membrane. It localises to the nucleus. The catalysed reaction is S-ubiquitinyl-[E2 ubiquitin-conjugating enzyme]-L-cysteine + [acceptor protein]-L-lysine = [E2 ubiquitin-conjugating enzyme]-L-cysteine + N(6)-ubiquitinyl-[acceptor protein]-L-lysine.. Its pathway is protein modification; protein ubiquitination. In terms of biological role, E3 ubiquitin-protein ligase. Mediates TSG101 monoubiquitination at multiple sites. Plays a role in the regulation of endosome-to-lysosome trafficking. Impairs MC1R- and MC4R-signaling by competing with GNAS-binding to MCRs and inhibiting agonist-induced cAMP production. Does not inhibit ADRB2-signaling. Does not promote MC1R ubiquitination. Also acts as a negative regulator of hedgehog signaling. The chain is E3 ubiquitin-protein ligase MGRN1 (Mgrn1) from Mus musculus (Mouse).